Reading from the N-terminus, the 1049-residue chain is Bifunctional cytochrome P450/NADPH--P450 reductase (1049 aa).

A cytochrome P450 region spans residues 2 to 472 (TIKEMPQPKT…STEQSAKKVR (471 aa)). Residue Tyr52 coordinates (9Z)-hexadecenoate. A heme-binding site is contributed by Cys401. The NADPH--P450 reductase stretch occupies residues 473–1049 (KKAENAHNTP…GRYAKDVWAG (577 aa)). A Flavodoxin-like domain is found at 483 to 622 (LLVLYGSNMG…TYEEWREHMW (140 aa)). Residues 489–494 (SNMGTA), 536–539 (SYNG), 570–572 (CGD), and 578–580 (TYQ) contribute to the FMN site. The region spanning 660–892 (HGAFSTNVVA…STPQSEFTLP (233 aa)) is the FAD-binding FR-type domain.

This sequence in the N-terminal section; belongs to the cytochrome P450 family. FAD serves as cofactor. The cofactor is FMN. It depends on heme as a cofactor.

The protein resides in the cytoplasm. It carries out the reaction 2 oxidized [cytochrome P450] + NADPH = 2 reduced [cytochrome P450] + NADP(+) + H(+). The catalysed reaction is an organic molecule + reduced [NADPH--hemoprotein reductase] + O2 = an alcohol + oxidized [NADPH--hemoprotein reductase] + H2O + H(+). Its activity is regulated as follows. Inhibited by N-(12-imidazolyl-dodecanoyl)-L-leucine. Functions as a fatty acid monooxygenase. Catalyzes hydroxylation of fatty acids at omega-1, omega-2 and omega-3 positions. Shows activity toward medium and long-chain fatty acids, with optimum chain lengths of 12, 14 and 16 carbons (lauric, myristic, and palmitic acids). Able to metabolize some of these primary metabolites to secondary and tertiary products. Marginal activity towards short chain lengths of 8-10 carbons. Hydroxylates highly branched fatty acids, which play an essential role in membrane fluidity regulation. Also displays a NADPH-dependent reductase activity in the C-terminal domain, which allows electron transfer from NADPH to the heme iron of the cytochrome P450 N-terminal domain. Involved in inactivation of quorum sensing signals of other competing bacteria by oxidazing efficiently acyl homoserine lactones (AHLs), molecules involved in quorum sensing signaling pathways, and their lactonolysis products acyl homoserines (AHs). The sequence is that of Bifunctional cytochrome P450/NADPH--P450 reductase from Priestia megaterium (strain ATCC 14581 / DSM 32 / CCUG 1817 / JCM 2506 / NBRC 15308 / NCIMB 9376 / NCTC 10342 / NRRL B-14308 / VKM B-512 / Ford 19) (Bacillus megaterium).